The sequence spans 177 residues: Anti-apoptotic protein NR13 (177 aa).

The BH1 signature appears at 75–94 (LEAEGGLNWGRLLALVVFTG). A helical transmembrane segment spans residues 86 to 106 (LLALVVFTGTLAAALAESGCE). The short motif at 126–141 (EWLEEHGGWDGFCRFF) is the BH2 element. Residues 156–176 (SNAIMAAAGFGIAGLAFLLVV) form a helical membrane-spanning segment.

Belongs to the Bcl-2 family. In terms of assembly, interacts with BAX. In terms of tissue distribution, expressed preferentially in heart, skeletal muscle, retina, optical tectum and bursa of Fabricius.

Its subcellular location is the cell membrane. In terms of biological role, shows anti-apoptotic properties. Counteract the pro-apoptotic activity of BAX. This chain is Anti-apoptotic protein NR13 (NR13), found in Gallus gallus (Chicken).